The primary structure comprises 81 residues: High-potential iron-sulfur protein (81 aa).

[4Fe-4S] cluster is bound by residues C43, C46, C59, and C73.

Belongs to the high-potential iron-sulfur protein (HiPIP) family. As to quaternary structure, homodimer.

The protein localises to the periplasm. Its function is as follows. Specific class of high-redox-potential 4Fe-4S ferredoxins. Functions in anaerobic electron transport in most purple and in some other photosynthetic bacteria and in at least one genus (Paracoccus) of halophilic, denitrifying bacteria. The polypeptide is High-potential iron-sulfur protein (Halochromatium salexigens (Chromatium salexigens)).